Consider the following 380-residue polypeptide: Chorismate synthase (380 aa).

Residues Arg40 and Arg46 each contribute to the NADP(+) site. FMN contacts are provided by residues 128-130, 247-248, Gly292, 307-311, and Arg333; these read RSS, QA, and KPIPT.

Belongs to the chorismate synthase family. As to quaternary structure, homotetramer. Requires FMNH2 as cofactor.

It carries out the reaction 5-O-(1-carboxyvinyl)-3-phosphoshikimate = chorismate + phosphate. It participates in metabolic intermediate biosynthesis; chorismate biosynthesis; chorismate from D-erythrose 4-phosphate and phosphoenolpyruvate: step 7/7. In terms of biological role, catalyzes the anti-1,4-elimination of the C-3 phosphate and the C-6 proR hydrogen from 5-enolpyruvylshikimate-3-phosphate (EPSP) to yield chorismate, which is the branch point compound that serves as the starting substrate for the three terminal pathways of aromatic amino acid biosynthesis. This reaction introduces a second double bond into the aromatic ring system. The sequence is that of Chorismate synthase from Alkaliphilus metalliredigens (strain QYMF).